Here is a 314-residue protein sequence, read N- to C-terminus: Ribosomal protein L11 methyltransferase (314 aa).

S-adenosyl-L-methionine-binding residues include Thr-161, Gly-182, Asp-204, and Asn-248.

The protein belongs to the methyltransferase superfamily. PrmA family.

It localises to the cytoplasm. It carries out the reaction L-lysyl-[protein] + 3 S-adenosyl-L-methionine = N(6),N(6),N(6)-trimethyl-L-lysyl-[protein] + 3 S-adenosyl-L-homocysteine + 3 H(+). In terms of biological role, methylates ribosomal protein L11. This Listeria monocytogenes serotype 1/2a (strain 10403S) protein is Ribosomal protein L11 methyltransferase.